The sequence spans 399 residues: UDP-N-acetylglucosamine--N-acetylmuramyl-(pentapeptide) pyrophosphoryl-undecaprenol N-acetylglucosamine transferase (399 aa).

The disordered stretch occupies residues 1-31 (MTSRFGHSQHPRRGRSARARAGRREGVQSNF). Over residues 7–21 (HSQHPRRGRSARARA) the composition is skewed to basic residues. Residues 58–60 (TGG), Asn170, Arg206, Ser234, Ile288, and Gln333 each bind UDP-N-acetyl-alpha-D-glucosamine.

The protein belongs to the glycosyltransferase 28 family. MurG subfamily.

It is found in the cell inner membrane. It catalyses the reaction di-trans,octa-cis-undecaprenyl diphospho-N-acetyl-alpha-D-muramoyl-L-alanyl-D-glutamyl-meso-2,6-diaminopimeloyl-D-alanyl-D-alanine + UDP-N-acetyl-alpha-D-glucosamine = di-trans,octa-cis-undecaprenyl diphospho-[N-acetyl-alpha-D-glucosaminyl-(1-&gt;4)]-N-acetyl-alpha-D-muramoyl-L-alanyl-D-glutamyl-meso-2,6-diaminopimeloyl-D-alanyl-D-alanine + UDP + H(+). Its pathway is cell wall biogenesis; peptidoglycan biosynthesis. Cell wall formation. Catalyzes the transfer of a GlcNAc subunit on undecaprenyl-pyrophosphoryl-MurNAc-pentapeptide (lipid intermediate I) to form undecaprenyl-pyrophosphoryl-MurNAc-(pentapeptide)GlcNAc (lipid intermediate II). This Acidovorax sp. (strain JS42) protein is UDP-N-acetylglucosamine--N-acetylmuramyl-(pentapeptide) pyrophosphoryl-undecaprenol N-acetylglucosamine transferase.